A 1717-amino-acid chain; its full sequence is Protein MON2 homolog (1717 aa).

Ser-2 is modified (N-acetylserine). Residues Ser-205 and Ser-537 each carry the phosphoserine modification. Residues 511–538 (ETECQTTTEEGSSPTQSTEQQDLQSTSD) form a disordered region. Residues 522 to 538 (SSPTQSTEQQDLQSTSD) show a composition bias toward polar residues.

It belongs to the MON2 family. As to quaternary structure, homooligomer. Heterotrimer with ATP9A and DOP1B; this interaction is retromer-independent. Interacts with SNX3.

The protein resides in the early endosome membrane. In terms of biological role, plays a role in regulating membrane trafficking of cargo proteins. Together with ATP9A and DOP1B, regulates SNX3 retromer-mediated endosomal sorting of WLS away from lysosomal degradation. This Homo sapiens (Human) protein is Protein MON2 homolog.